The following is a 118-amino-acid chain: Large ribosomal subunit protein bL19 (118 aa).

This sequence belongs to the bacterial ribosomal protein bL19 family.

Functionally, this protein is located at the 30S-50S ribosomal subunit interface and may play a role in the structure and function of the aminoacyl-tRNA binding site. This chain is Large ribosomal subunit protein bL19, found in Helicobacter hepaticus (strain ATCC 51449 / 3B1).